The primary structure comprises 137 residues: Fluoride-specific ion channel FluC 1 (137 aa).

4 helical membrane passes run 4–24, 37–57, 62–82, and 100–120; these read LIYIIVGIAGILGALSRYYLG, LATLLINLVGCFLLAWLTTYI, ILPAEIITGIGTGFIGSFTTF, and IAFLYVSCSILGGLIMSGLGY. Na(+) is bound by residues Gly77 and Thr80.

Belongs to the fluoride channel Fluc/FEX (TC 1.A.43) family.

Its subcellular location is the cell membrane. The enzyme catalyses fluoride(in) = fluoride(out). With respect to regulation, na(+) is not transported, but it plays an essential structural role and its presence is essential for fluoride channel function. In terms of biological role, fluoride-specific ion channel. Important for reducing fluoride concentration in the cell, thus reducing its toxicity. The polypeptide is Fluoride-specific ion channel FluC 1 (Bacillus cereus (strain ATCC 10987 / NRS 248)).